We begin with the raw amino-acid sequence, 222 residues long: MLSRAVCGTGRQLAPALGYLGSRQKHSLPDLPYDYGALEPHINAQIMQLHHSKHHAAYVNNLNVTEEKYQEALAKGDVTAQIALQPALKFNGGGHINHSIFWTNLSPNGGGEPKGELLEAIKRDFGSFEKFKEKLTAASVGVQGSGWGWLGFNKERGQLQIAACPNQDPLQGTTGLIPLLGIDVWEHAYYLQYKNVRPDYLKAIWNVINWENVTERYMACKK.

A mitochondrion-targeting transit peptide spans 1-24; that stretch reads MLSRAVCGTGRQLAPALGYLGSRQ. Position 50 (H50) interacts with Mn(2+). Y58 bears the 3'-nitrotyrosine mark. Residues K68 and K75 each carry the N6-acetyllysine; alternate modification. K68 and K75 each carry N6-succinyllysine; alternate. H98 lines the Mn(2+) pocket. An N6-acetyllysine modification is found at K114. Residues K122 and K130 each carry the N6-acetyllysine; alternate modification. Residues K122 and K130 each carry the N6-succinyllysine; alternate modification. The Mn(2+) site is built by D183 and H187. K202 carries the N6-acetyllysine modification.

It belongs to the iron/manganese superoxide dismutase family. Homotetramer. Requires Mn(2+) as cofactor. In terms of processing, nitrated under oxidative stress. Nitration coupled with oxidation inhibits the catalytic activity. Acetylation at Lys-122 decreases enzymatic activity. Deacetylated by SIRT3 upon exposure to ionizing radiations or after long fasting. Post-translationally, polyubiquitinated; leading to proteasomal degradation. Deubiquitinated by USP36 which increases protein stability.

It localises to the mitochondrion matrix. The enzyme catalyses 2 superoxide + 2 H(+) = H2O2 + O2. Its function is as follows. Destroys superoxide anion radicals which are normally produced within the cells and which are toxic to biological systems. The sequence is that of Superoxide dismutase [Mn], mitochondrial (SOD2) from Macaca fascicularis (Crab-eating macaque).